Reading from the N-terminus, the 443-residue chain is Phosphoglucosamine mutase (443 aa).

S100 acts as the Phosphoserine intermediate in catalysis. S100, D239, D241, and D243 together coordinate Mg(2+). S100 is subject to Phosphoserine.

It belongs to the phosphohexose mutase family. It depends on Mg(2+) as a cofactor. In terms of processing, activated by phosphorylation.

It carries out the reaction alpha-D-glucosamine 1-phosphate = D-glucosamine 6-phosphate. Catalyzes the conversion of glucosamine-6-phosphate to glucosamine-1-phosphate. The sequence is that of Phosphoglucosamine mutase from Shewanella sediminis (strain HAW-EB3).